The primary structure comprises 506 residues: Voltage-gated potassium channel regulatory subunit KCNG4 (506 aa).

Over 1 to 216 (MPMSSRDRDL…EMVEDPQSGL (216 aa)) the chain is Cytoplasmic. Residues 217–238 (PGKVFACLSVLFVATTAVSLCV) traverse the membrane as a helical segment. The Extracellular segment spans residues 239 to 259 (STMPDFRAEEGKGECTRKCYY). The chain crosses the membrane as a helical span at residues 260–281 (IFVVESICVAWFSLEFCLRFVQ). Topologically, residues 282–292 (APNKCQFFRGP) are cytoplasmic. The helical transmembrane segment at 293–312 (LNVIDILAISPYYVSLAVSD) threads the bilayer. At 313–326 (ESPEAGERPSSSSY) the chain is on the extracellular side. Residues 327–351 (LEKVGLVLRVLRALRILYVMRLARH) form a helical; Voltage-sensor membrane-spanning segment. Topologically, residues 352-366 (SLGLQTLGLTVRRCA) are cytoplasmic. Residues 367 to 388 (REFGLLMLFLAVAVTLFSPLVY) form a helical membrane-spanning segment. Over 389-403 (VAENESGRVLEFTSI) the chain is Extracellular. An intramembrane region (helical) is located at residues 404-415 (PASYWWAIISMT). The short motif at 416 to 421 (TVGYGD) is the Selectivity filter element. Residues 416 to 423 (TVGYGDMV) lie within the membrane without spanning it. At 424–430 (PRSVPGQ) the chain is on the extracellular side. Residues 431–459 (MVALSSILSGILIMAFPATSIFHTFSHSY) traverse the membrane as a helical segment. Residues 460-506 (LELKREQEQVQARLRRLQNTNSASERELLSDVDDLVPEGLTSPGRYM) lie on the Cytoplasmic side of the membrane.

Belongs to the potassium channel family. G (TC 1.A.1.2) subfamily. Kv6.4/KCNG4 sub-subfamily. As to quaternary structure, heterotetramer with KCNB1. Does not form homomultimer.

The protein localises to the cell membrane. Regulatory subunit of the voltage-gated potassium (Kv) channel which, when coassembled with KCNB1, modulates the kinetics parameters of the heterotetrameric channel namely the time course of activation, deactivation and inactivation and on the voltage-dependence of activation. Potassium channel subunit that does not form functional channels by itself. Reduces the deactivation rate. Modulates the threshold for activation by shifting by approximately 20 mV in hyperpolarizing direction. Markedly changes the inactivation by shifting the voltage dependence of inactivation by approximately 40 mV in hyperpolarizing direction. Acceleratee activation and enhances the time course of activation. The polypeptide is Voltage-gated potassium channel regulatory subunit KCNG4 (Mus musculus (Mouse)).